The sequence spans 318 residues: ATP-dependent (S)-NAD(P)H-hydrate dehydratase (318 aa).

Positions 3–313 constitute a YjeF C-terminal domain; the sequence is AREVFKRVIP…KEIGPAFDSL (311 aa). (6S)-NADPHX is bound by residues Gly119 and 172 to 178; that span reads NTNEFKR. ATP is bound by residues 210–214 and 229–238; these read KGSKD and TSLRRCGGQG. Asp239 is a binding site for (6S)-NADPHX.

It belongs to the NnrD/CARKD family. Mg(2+) is required as a cofactor.

It localises to the cytoplasm. The enzyme catalyses (6S)-NADHX + ATP = ADP + phosphate + NADH + H(+). The catalysed reaction is (6S)-NADPHX + ATP = ADP + phosphate + NADPH + H(+). In terms of biological role, catalyzes the dehydration of the S-form of NAD(P)HX at the expense of ATP, which is converted to ADP. Together with NAD(P)HX epimerase, which catalyzes the epimerization of the S- and R-forms, the enzyme allows the repair of both epimers of NAD(P)HX, a damaged form of NAD(P)H that is a result of enzymatic or heat-dependent hydration. This Batrachochytrium dendrobatidis (strain JAM81 / FGSC 10211) (Frog chytrid fungus) protein is ATP-dependent (S)-NAD(P)H-hydrate dehydratase.